We begin with the raw amino-acid sequence, 138 residues long: Histone H2AX (138 aa).

A disordered region spans residues 1 to 23 (MSTTGKGGKAKGKTASSKQVSRS). S2 is subject to N-acetylserine. K6, K9, K11, K13, and K18 each carry N6-acetyllysine. At S123 the chain carries Phosphoserine. K124 is covalently cross-linked (Glycyl lysine isopeptide (Lys-Gly) (interchain with G-Cter in ubiquitin)). 3 positions are modified to phosphoserine: S125, S130, and S135. The [ST]-Q motif motif lies at 135 to 136 (SQ).

This sequence belongs to the histone H2A family. The nucleosome is a histone octamer containing two molecules each of H2A, H2B, H3 and H4 assembled in one H3-H4 heterotetramer and two H2A-H2B heterodimers. The octamer wraps approximately 147 bp of DNA. Monoubiquitination of Lys-124 gives a specific tag for epigenetic transcriptional repression. In terms of processing, acetylation occurs almost exclusively in the MAC.

It is found in the nucleus. The protein localises to the chromosome. In terms of biological role, core component of nucleosome. Nucleosomes wrap and compact DNA into chromatin, limiting DNA accessibility to the cellular machineries which require DNA as a template. Histones thereby play a central role in transcription regulation, DNA repair, DNA replication and chromosomal stability. DNA accessibility is regulated via a complex set of post-translational modifications of histones, also called histone code, and nucleosome remodeling. The sequence is that of Histone H2AX (HTA1) from Tetrahymena pyriformis.